Reading from the N-terminus, the 425-residue chain is UDP-N-acetylglucosamine 1-carboxyvinyltransferase (425 aa).

25–26 (KN) serves as a coordination point for phosphoenolpyruvate. UDP-N-acetyl-alpha-D-glucosamine is bound at residue Arg-95. The active-site Proton donor is Cys-119. At Cys-119 the chain carries 2-(S-cysteinyl)pyruvic acid O-phosphothioketal. Residues 124 to 128 (RPVDQ), Asp-306, and Ile-328 contribute to the UDP-N-acetyl-alpha-D-glucosamine site.

Belongs to the EPSP synthase family. MurA subfamily.

It is found in the cytoplasm. It catalyses the reaction phosphoenolpyruvate + UDP-N-acetyl-alpha-D-glucosamine = UDP-N-acetyl-3-O-(1-carboxyvinyl)-alpha-D-glucosamine + phosphate. Its pathway is cell wall biogenesis; peptidoglycan biosynthesis. In terms of biological role, cell wall formation. Adds enolpyruvyl to UDP-N-acetylglucosamine. This Thermus thermophilus (strain ATCC BAA-163 / DSM 7039 / HB27) protein is UDP-N-acetylglucosamine 1-carboxyvinyltransferase.